Here is a 620-residue protein sequence, read N- to C-terminus: Chaperone protein HscA homolog (620 aa).

Belongs to the heat shock protein 70 family.

In terms of biological role, chaperone involved in the maturation of iron-sulfur cluster-containing proteins. Has a low intrinsic ATPase activity which is markedly stimulated by HscB. The protein is Chaperone protein HscA homolog of Shewanella piezotolerans (strain WP3 / JCM 13877).